The primary structure comprises 178 residues: Large ribosomal subunit protein uL6 (178 aa).

This sequence belongs to the universal ribosomal protein uL6 family. As to quaternary structure, part of the 50S ribosomal subunit.

Its function is as follows. This protein binds to the 23S rRNA, and is important in its secondary structure. It is located near the subunit interface in the base of the L7/L12 stalk, and near the tRNA binding site of the peptidyltransferase center. The sequence is that of Large ribosomal subunit protein uL6 from Desulfatibacillum aliphaticivorans.